The sequence spans 95 residues: Aspartyl/glutamyl-tRNA(Asn/Gln) amidotransferase subunit C (95 aa).

It belongs to the GatC family. As to quaternary structure, heterotrimer of A, B and C subunits.

The enzyme catalyses L-glutamyl-tRNA(Gln) + L-glutamine + ATP + H2O = L-glutaminyl-tRNA(Gln) + L-glutamate + ADP + phosphate + H(+). It carries out the reaction L-aspartyl-tRNA(Asn) + L-glutamine + ATP + H2O = L-asparaginyl-tRNA(Asn) + L-glutamate + ADP + phosphate + 2 H(+). Functionally, allows the formation of correctly charged Asn-tRNA(Asn) or Gln-tRNA(Gln) through the transamidation of misacylated Asp-tRNA(Asn) or Glu-tRNA(Gln) in organisms which lack either or both of asparaginyl-tRNA or glutaminyl-tRNA synthetases. The reaction takes place in the presence of glutamine and ATP through an activated phospho-Asp-tRNA(Asn) or phospho-Glu-tRNA(Gln). The polypeptide is Aspartyl/glutamyl-tRNA(Asn/Gln) amidotransferase subunit C (Acidiphilium cryptum (strain JF-5)).